We begin with the raw amino-acid sequence, 290 residues long: MSLKSAPYLSEISVSNGDSGIGFDGGCADPYAPSRVPSRRWDYSTKWDMKITGAAREFNLSKQPVLTGLINSMRMKTSLTHPEIHVVWRGLVPPAVCRDDVVVTLRFTPDRSEKMGLIAQHTHGMHLYMHHVFYPSHSIRVGPGEPLPWAVGFSVPDFSLDPNYTIAEVHVRLTGYFSELPEYDIQRDSELISIVPMEEHVTGYATSAPRIPNTAWVARGYKIGVNGNSLAKKIKFLQEIGVDIEALRMVGQLDNTLKKVSPRAIDGSPSAEAKSEAARLVNAHVKTLTA.

The polypeptide is Protein 3 (Lettuce big-vein associated virus (isolate Japan/Kagawa) (LBVaV)).